Consider the following 257-residue polypeptide: DNA repair protein RecO (257 aa).

The protein belongs to the RecO family.

In terms of biological role, involved in DNA repair and RecF pathway recombination. This chain is DNA repair protein RecO, found in Streptococcus sanguinis (strain SK36).